The following is a 178-amino-acid chain: Transcription factor E (178 aa).

Residues 3–86 form the HTH TFE/IIEalpha-type domain; it reads AHEALAEIAG…YWRITDEPIQ (84 aa).

The protein belongs to the TFE family. In terms of assembly, monomer. Interaction with RNA polymerase subunits RpoF and RpoE is necessary for Tfe stimulatory transcription activity. Able to interact with Tbp and RNA polymerase in the absence of DNA promoter. Interacts both with the preinitiation and elongation complexes.

Transcription factor that plays a role in the activation of archaeal genes transcribed by RNA polymerase. Facilitates transcription initiation by enhancing TATA-box recognition by TATA-box-binding protein (Tbp), and transcription factor B (Tfb) and RNA polymerase recruitment. Not absolutely required for transcription in vitro, but particularly important in cases where Tbp or Tfb function is not optimal. It dynamically alters the nucleic acid-binding properties of RNA polymerases by stabilizing the initiation complex and destabilizing elongation complexes. Seems to translocate with the RNA polymerase following initiation and acts by binding to the non template strand of the transcription bubble in elongation complexes. This is Transcription factor E from Thermofilum pendens (strain DSM 2475 / Hrk 5).